The following is a 452-amino-acid chain: GTPase Der (452 aa).

EngA-type G domains lie at 4 to 169 and 177 to 352; these read PIVA…PSPD and INVS…EEHR. GTP contacts are provided by residues 10–17, 57–61, 120–123, 183–190, 230–234, and 295–298; these read GRPNVGKS, DTGGL, NKCE, DTAGI, and NKWD. The 86-residue stretch at 353–438 folds into the KH-like domain; that stretch reads RRVNTSVVNE…PIRLLWRGKK (86 aa).

The protein belongs to the TRAFAC class TrmE-Era-EngA-EngB-Septin-like GTPase superfamily. EngA (Der) GTPase family. As to quaternary structure, associates with the 50S ribosomal subunit.

Functionally, GTPase that plays an essential role in the late steps of ribosome biogenesis. The chain is GTPase Der from Crocosphaera subtropica (strain ATCC 51142 / BH68) (Cyanothece sp. (strain ATCC 51142)).